The primary structure comprises 106 residues: NADH dehydrogenase [ubiquinone] 1 beta subcomplex subunit 10-B (106 aa).

The tract at residues 1-25 (MGRKKGLPEFEESAPDGFDPENPYK) is disordered.

It belongs to the complex I NDUFB10 subunit family. As to quaternary structure, complex I is composed of at least 49 different subunits.

It localises to the mitochondrion inner membrane. Its function is as follows. Accessory subunit of the mitochondrial membrane respiratory chain NADH dehydrogenase (Complex I), that is believed not to be involved in catalysis. Complex I functions in the transfer of electrons from NADH to the respiratory chain. The immediate electron acceptor for the enzyme is believed to be ubiquinone. The chain is NADH dehydrogenase [ubiquinone] 1 beta subcomplex subunit 10-B from Arabidopsis thaliana (Mouse-ear cress).